The chain runs to 678 residues: Zinc finger protein 334 (678 aa).

Residues 8-79 form the KRAB domain; that stretch reads VSFQDLTVNF…EEFSNQNYPE (72 aa). C2H2-type zinc fingers lie at residues 235–257, 263–285, 291–313, 319–341, 347–369, 375–397, 403–425, 431–453, 459–481, 542–564, 570–592, 598–620, 626–648, and 654–676; these read NEPCECRKTFSKRSTLVVHQRIH, YVCNDCRKTFRVKTSLTRHQRIH, YECSECGKTFIDKSALIVHQKIH, YECNECGKTFFRKSALAEHFRSH, YECKECGNAFSKKSYLVVHQRTH, NECKECGKTFFCQSALTAHQRIH, YECSECEKTFFCQSALNVHRRSH, YECSQCGKFLCTKSALIAHQITH, YECNECGKFFCHKSTLTIHQRTH, YECNECGRTYCRKSALTHHQRTH, YECNECGKTFCQKFSFVEHQRTH, YERNECGKSFCHKSAFRVHRRIH, YECNQCGKTYRRLWTLTEHQKIH, and YECNKCEKTFRHKSNFLLHQKSH.

It belongs to the krueppel C2H2-type zinc-finger protein family.

Its subcellular location is the nucleus. Functionally, may be involved in transcriptional regulation. In Pongo abelii (Sumatran orangutan), this protein is Zinc finger protein 334 (ZNF334).